The primary structure comprises 543 residues: Vibriobactin-specific 2,3-dihydroxybenzoate-AMP ligase (543 aa).

The helical transmembrane segment at Phe-240–Leu-259 threads the bilayer.

This sequence belongs to the ATP-dependent AMP-binding enzyme family.

The protein resides in the cell inner membrane. The catalysed reaction is 2,3-dihydroxybenzoate + holo-[ACP] + ATP = 2,3-dihydroxybenzoyl-[ACP] + AMP + diphosphate. It participates in siderophore biosynthesis; vibriobactin biosynthesis. Activation of the carboxylate group of 2,3-dihydroxy-benzoate (DHB), via ATP-dependent PPi exchange reactions, to the acyladenylate, preparing that molecule for the final stages of vibriobactin synthesis. The chain is Vibriobactin-specific 2,3-dihydroxybenzoate-AMP ligase (vibE) from Vibrio cholerae serotype O1 (strain ATCC 39315 / El Tor Inaba N16961).